Consider the following 878-residue polypeptide: Staphylococcal nuclease domain-containing protein 1 (878 aa).

TNase-like domains are found at residues Gln3–Pro142 and Lys167–Asn312. The residue at position 316 (Ser316) is a Phosphoserine. TNase-like domains are found at residues Lys326–Gly464 and Arg493–Asp626. A Tudor domain is found at Lys695 to Leu755.

The protein resides in the cytoplasm. Its subcellular location is the cytosol. This chain is Staphylococcal nuclease domain-containing protein 1, found in Schizosaccharomyces pombe (strain 972 / ATCC 24843) (Fission yeast).